We begin with the raw amino-acid sequence, 184 residues long: uncharacterized protein (184 aa).

A signal peptide spans 1 to 23 (MFCLLHLCFYLANFASSIKRTHA).

Its subcellular location is the secreted. This is an uncharacterized protein from Homo sapiens (Human).